The chain runs to 288 residues: 4-diphosphocytidyl-2-C-methyl-D-erythritol kinase (288 aa).

Lys8 is an active-site residue. 92–102 (PVAAGMAGGST) contributes to the ATP binding site. Asp134 is an active-site residue.

This sequence belongs to the GHMP kinase family. IspE subfamily.

The enzyme catalyses 4-CDP-2-C-methyl-D-erythritol + ATP = 4-CDP-2-C-methyl-D-erythritol 2-phosphate + ADP + H(+). It functions in the pathway isoprenoid biosynthesis; isopentenyl diphosphate biosynthesis via DXP pathway; isopentenyl diphosphate from 1-deoxy-D-xylulose 5-phosphate: step 3/6. Catalyzes the phosphorylation of the position 2 hydroxy group of 4-diphosphocytidyl-2C-methyl-D-erythritol. In Clostridium perfringens (strain 13 / Type A), this protein is 4-diphosphocytidyl-2-C-methyl-D-erythritol kinase.